The primary structure comprises 241 residues: Pyridoxal phosphate phosphatase PHOSPHO2 (241 aa).

The Nucleophile role is filled by D8. The Mg(2+) site is built by D8 and D10. The active-site Proton donor is D10. Residues D19 and D99 each contribute to the substrate site. Residue D179 participates in Mg(2+) binding.

It belongs to the HAD-like hydrolase superfamily. PHOSPHO family. Requires Mg(2+) as cofactor.

The catalysed reaction is pyridoxal 5'-phosphate + H2O = pyridoxal + phosphate. Functionally, phosphatase that has high activity toward pyridoxal 5'-phosphate (PLP). Also active at much lower level toward pyrophosphate, phosphoethanolamine (PEA), phosphocholine (PCho), phospho-l-tyrosine, fructose-6-phosphate, p-nitrophenyl phosphate, and h-glycerophosphate. This Homo sapiens (Human) protein is Pyridoxal phosphate phosphatase PHOSPHO2 (PHOSPHO2).